The sequence spans 280 residues: Tumor necrosis factor ligand superfamily member 6 (280 aa).

Residues 1–80 are Cytoplasmic-facing; sequence MQQPLNYPYP…KTRRDHNTGL (80 aa). The tract at residues 20 to 71 is disordered; the sequence is SSPWGPPGSVLPCPSSVPGRPGQRRPPPPPPPTLPPPPPPPPLPPLPLPPLK. The span at 43–69 shows a compositional bias: pro residues; the sequence is RRPPPPPPPTLPPPPPPPPLPPLPLPP. A helical; Signal-anchor for type II membrane protein membrane pass occupies residues 81 to 101; that stretch reads CLLVMFFMVLVALVGLGLGMF. The Extracellular portion of the chain corresponds to 102–280; it reads QLFHLQKELA…SKTFFGLYKL (179 aa). The THD domain occupies 144-280; the sequence is KVAHLTGKPN…SKTFFGLYKL (137 aa). Asn-183 is a glycosylation site (N-linked (GlcNAc...) asparagine). Cysteines 201 and 232 form a disulfide. 2 N-linked (GlcNAc...) asparagine glycosylation sites follow: Asn-249 and Asn-259.

This sequence belongs to the tumor necrosis factor family. Homotrimer. Interacts with ARHGAP9, BAIAP2L1, BTK, CACNB3, CACNB4, CRK, DLG2, DNMBP, DOCK4, EPS8L3, FGR, FYB1, FYN, HCK, ITK, ITSN2, KALRN, LYN, MACC1, MIA, MPP4, MYO15A, NCF1, NCK1, NCK2, NCKIPSD, OSTF1, PIK3R1, PSTPIP1, RIMBP3C, SAMSN1, SH3GL3, SH3PXD2B, SH3PXD2A, SH3RF2, SKAP2, SNX33, SNX9, SORBS3, SPTA1, SRC, SRGAP1, SRGAP2, SRGAP3, TEC, TJP3 and YES1. The soluble form derives from the membrane form by proteolytic processing. The membrane-bound form undergoes two successive intramembrane proteolytic cleavages. The first one is processed by ADAM10 producing an N-terminal fragment, which lacks the receptor-binding extracellular domain. This ADAM10-processed FasL (FasL APL) remnant form is still membrane anchored and further processed by SPPL2A that liberates the FasL intracellular domain (FasL ICD). FasL shedding by ADAM10 is a prerequisite for subsequent intramembrane cleavage by SPPL2A in T-cells. In terms of processing, phosphorylated by FGR on tyrosine residues; this is required for ubiquitination and subsequent internalization. Post-translationally, N-glycosylated. Glycosylation enhances apoptotic activity. Monoubiquitinated.

Its subcellular location is the cell membrane. It localises to the cytoplasmic vesicle lumen. It is found in the lysosome lumen. The protein localises to the secreted. The protein resides in the nucleus. In terms of biological role, cytokine that binds to TNFRSF6/FAS, a receptor that transduces the apoptotic signal into cells. Involved in cytotoxic T-cell-mediated apoptosis, natural killer cell-mediated apoptosis and in T-cell development. Initiates fratricidal/suicidal activation-induced cell death (AICD) in antigen-activated T-cells contributing to the termination of immune responses. TNFRSF6/FAS-mediated apoptosis has also a role in the induction of peripheral tolerance. Binds to TNFRSF6B/DcR3, a decoy receptor that blocks apoptosis. Induces FAS-mediated activation of NF-kappa-B, initiating non-apoptotic signaling pathways. Can induce apoptosis but does not appear to be essential for this process. Its function is as follows. Cytoplasmic form induces gene transcription inhibition. The protein is Tumor necrosis factor ligand superfamily member 6 (FASLG) of Felis catus (Cat).